Here is a 178-residue protein sequence, read N- to C-terminus: Interleukin-10 (178 aa).

The signal sequence occupies residues 1–18 (MPGSALLCCLLLLTGMRI). N29 carries N-linked (GlcNAc...) asparagine glycosylation. Cystine bridges form between C30–C126 and C80–C132. The N-linked (GlcNAc...) asparagine glycan is linked to N134.

It belongs to the IL-10 family. In terms of assembly, homodimer. Interacts with IL10RA and IL10RB.

The protein localises to the secreted. Major immune regulatory cytokine that acts on many cells of the immune system where it has profound anti-inflammatory functions, limiting excessive tissue disruption caused by inflammation. Mechanistically, IL10 binds to its heterotetrameric receptor comprising IL10RA and IL10RB leading to JAK1 and STAT2-mediated phosphorylation of STAT3. In turn, STAT3 translocates to the nucleus where it drives expression of anti-inflammatory mediators. Targets antigen-presenting cells (APCs) such as macrophages and monocytes and inhibits their release of pro-inflammatory cytokines including granulocyte-macrophage colony-stimulating factor /GM-CSF, granulocyte colony-stimulating factor/G-CSF, IL-1 alpha, IL-1 beta, IL-6, IL-8 and TNF-alpha. Also interferes with antigen presentation by reducing the expression of MHC-class II and co-stimulatory molecules, thereby inhibiting their ability to induce T cell activation. In addition, controls the inflammatory response of macrophages by reprogramming essential metabolic pathways including mTOR signaling. This chain is Interleukin-10 (Il10), found in Mus musculus (Mouse).